Reading from the N-terminus, the 102-residue chain is Small ubiquitin-related modifier 1-A (102 aa).

The interval 1–20 (MSDQEAKPSSEDLGDKKDGG) is disordered. Residues 21–98 (DYIKLKVIGQ…IEVYQEQTGG (78 aa)) form the Ubiquitin-like domain. G98 is covalently cross-linked (Glycyl lysine isopeptide (Gly-Lys) (interchain with K-? in acceptor proteins)). A propeptide spanning residues 99-102 (HSTF) is cleaved from the precursor.

It belongs to the ubiquitin family. SUMO subfamily. Interacts with sae2, ube2i, ranbp2, pias1 and pias2. Covalently attached to a number of proteins including rangap1 and ranbp2. Interacts with sox9 and sox10. Post-translationally, cleavage of precursor form by a sentrin-specific protease is necessary for function.

The protein resides in the nucleus membrane. It localises to the nucleus speckle. It is found in the cytoplasm. Its subcellular location is the nucleus. The protein localises to the PML body. The protein resides in the cell membrane. In terms of biological role, ubiquitin-like protein that can be covalently attached to proteins as a monomer or a lysine-linked polymer. Covalent attachment via an isopeptide bond to its substrates requires prior activation by the E1 complex sae1-sae2 and linkage to the E2 enzyme ube2i. This post-translational modification on lysine residues of proteins plays a crucial role in a number of cellular processes such as nuclear transport, DNA replication and repair, mitosis and signal transduction. Polymeric sumo1 chains are also susceptible to polyubiquitination which functions as a signal for proteasomal degradation of modified proteins. In Xenopus laevis (African clawed frog), this protein is Small ubiquitin-related modifier 1-A (sumo1-a).